The chain runs to 352 residues: Glycerol-1-phosphate dehydrogenase [NAD(P)+] (352 aa).

NAD(+)-binding positions include 98–102 (GKPID) and 120–123 (TAAS). Asp125 contacts substrate. Ser129 contributes to the NAD(+) binding site. Asp172 lines the substrate pocket. Zn(2+) is bound by residues Asp172 and His252. His256 is a substrate binding site. His268 is a binding site for Zn(2+).

Belongs to the glycerol-1-phosphate dehydrogenase family. The cofactor is Zn(2+).

Its subcellular location is the cytoplasm. It catalyses the reaction sn-glycerol 1-phosphate + NAD(+) = dihydroxyacetone phosphate + NADH + H(+). The catalysed reaction is sn-glycerol 1-phosphate + NADP(+) = dihydroxyacetone phosphate + NADPH + H(+). It participates in membrane lipid metabolism; glycerophospholipid metabolism. In terms of biological role, catalyzes the NAD(P)H-dependent reduction of dihydroxyacetonephosphate (DHAP or glycerone phosphate) to glycerol 1-phosphate (G1P). The G1P thus generated is used as the glycerophosphate backbone of phospholipids in the cellular membranes of Archaea. This Natronomonas pharaonis (strain ATCC 35678 / DSM 2160 / CIP 103997 / JCM 8858 / NBRC 14720 / NCIMB 2260 / Gabara) (Halobacterium pharaonis) protein is Glycerol-1-phosphate dehydrogenase [NAD(P)+].